Here is a 748-residue protein sequence, read N- to C-terminus: Histone-lysine N-methyltransferase EZH2 (748 aa).

Residues 184-199 (YEDDEDGDDNQDDEQD) show a composition bias toward acidic residues. 2 disordered regions span residues 184–220 (YEDD…LRKF) and 342–428 (AERI…NIEP). Basic and acidic residues predominate over residues 200–220 (DTAKDQDDNMEDKETQPLRKF). The segment covering 347–359 (TPPKRPSGRRRGR) has biased composition (basic residues). Polar residues predominate over residues 362–374 (NNTSRPSTPTVNV). Positions 376–387 (EAKDTDSDREAG) are enriched in basic and acidic residues. The region spanning 505–607 (CRKIQLKKDG…SKNVSCKNCS (103 aa)) is the CXC domain. In terms of domain architecture, SET spans 614–729 (KHLLLAPSDV…TGEELFFDYR (116 aa)).

The protein belongs to the class V-like SAM-binding methyltransferase superfamily. Histone-lysine methyltransferase family. EZ subfamily. In terms of assembly, component of the prc2/eed-ezh2 complex.

It is found in the nucleus. The enzyme catalyses L-lysyl(27)-[histone H3] + 3 S-adenosyl-L-methionine = N(6),N(6),N(6)-trimethyl-L-lysyl(27)-[histone H3] + 3 S-adenosyl-L-homocysteine + 3 H(+). In terms of biological role, polycomb group (PcG) protein. Catalytic subunit of the prc2/eed-ezh2 complex, which methylates 'Lys-9' and 'Lys-27' of histone H3, leading to transcriptional repression of the affected target gene. May repress transcription of the egr2 and en2 genes. May regulate the circadian clock via histone methylation at the promoter of the circadian genes. This is Histone-lysine N-methyltransferase EZH2 (ezh2-a) from Xenopus laevis (African clawed frog).